Reading from the N-terminus, the 191-residue chain is ECF RNA polymerase sigma factor ShbA (191 aa).

The interval 27–98 is sigma-70 factor domain-2; that stretch reads LLAHVHPLAL…HKVADLQRAA (72 aa). The tract at residues 100-122 is disordered; that stretch reads RHPGSTAVPSDEMPERPDDSLGP. Residues 112–122 show a composition bias toward basic and acidic residues; the sequence is MPERPDDSLGP. Residues 138-187 are sigma-70 factor domain-4; sequence LLANLPENQRELLVLRVAVGLTAEETGQMLGMSPGAVRVAQHRALSRLRA. Residues 160-179 constitute a DNA-binding region (H-T-H motif); that stretch reads AEETGQMLGMSPGAVRVAQH.

This sequence belongs to the sigma-70 factor family. ECF subfamily.

Sigma factors are initiation factors that promote the attachment of RNA polymerase to specific initiation sites and are then released. Extracytoplasmic function (ECF) sigma factors are held in an inactive form by an anti-sigma factor until released. This alternative sigma factor governs the transcription of the principal sigma factor HrdB (SigA) throughout growth. Acts by binding to the promoter region. The protein is ECF RNA polymerase sigma factor ShbA of Streptomyces griseus subsp. griseus (strain JCM 4626 / CBS 651.72 / NBRC 13350 / KCC S-0626 / ISP 5235).